Reading from the N-terminus, the 454-residue chain is Protection of telomeres protein 1b (454 aa).

The protein belongs to the telombin family. As to quaternary structure, interacts with TRB1, TRB2 and TRB3. Expressed at low levels in roots, rosette leaves, cauline leaves, stems and flowers.

It localises to the nucleus. The protein resides in the chromosome. Its subcellular location is the telomere. Negatively regulates telomerase activity and participates in chromosome end protection. Binds RNA non-specifically. Associates with a regulatory Pol III-dependent lncRNA, which represses telomerase activity in response to DNA damage. Binds single-stranded telomeric DNA with weak affinity. The polypeptide is Protection of telomeres protein 1b (Arabidopsis thaliana (Mouse-ear cress)).